The sequence spans 185 residues: Elongation factor P (185 aa).

It belongs to the elongation factor P family.

The protein localises to the cytoplasm. It participates in protein biosynthesis; polypeptide chain elongation. Involved in peptide bond synthesis. Stimulates efficient translation and peptide-bond synthesis on native or reconstituted 70S ribosomes in vitro. Probably functions indirectly by altering the affinity of the ribosome for aminoacyl-tRNA, thus increasing their reactivity as acceptors for peptidyl transferase. This chain is Elongation factor P, found in Acaryochloris marina (strain MBIC 11017).